Reading from the N-terminus, the 134-residue chain is Prefoldin subunit 4 (134 aa).

Residue Ala-2 is modified to N-acetylalanine. Ser-125 is subject to Phosphoserine.

It belongs to the prefoldin subunit beta family. In terms of assembly, heterohexamer of two PFD-alpha type and four PFD-beta type subunits. Interacts with URI1; the interaction is phosphorylation-dependent and occurs in a growth-dependent manner.

It localises to the nucleus. The protein localises to the cytoplasm. It is found in the mitochondrion. Binds specifically to cytosolic chaperonin (c-CPN) and transfers target proteins to it. Binds to nascent polypeptide chain and promotes folding in an environment in which there are many competing pathways for nonnative proteins. This chain is Prefoldin subunit 4 (PFDN4), found in Homo sapiens (Human).